The primary structure comprises 211 residues: Phosphoserine phosphatase 1 (211 aa).

The active-site Tele-phosphohistidine intermediate is the His-9. The active site involves His-150.

Belongs to the histidine phosphatase superfamily. Metal-independent phosphoserine phosphatase family. As to quaternary structure, homodimer. Can also form a heterodimer with PspB.

It catalyses the reaction O-phospho-L-serine + H2O = L-serine + phosphate. The catalysed reaction is O-phospho-D-serine + H2O = D-serine + phosphate. It participates in amino-acid biosynthesis; L-serine biosynthesis; L-serine from 3-phospho-D-glycerate: step 3/3. Its activity is regulated as follows. Activity is not inhibited by EDTA in vitro, nor enhanced by the addition of Mg(2+). Catalyzes the dephosphorylation of L-phosphoserine to serine and inorganic phosphate. Is poorly or not active toward D-phosphoserine, DL-phosphothreonine, 3-phosphoglycerate, para-nitrophenylphosphate, and fructose-6-phosphate. Does not display phosphoglycerate mutase activity. The chain is Phosphoserine phosphatase 1 (pspA) from Hydrogenobacter thermophilus (strain DSM 6534 / IAM 12695 / TK-6).